The chain runs to 314 residues: Olfactory receptor 10A3 (314 aa).

Topologically, residues 1-25 (MKRQNQSCVVEFILLGFSNFPELQV) are extracellular. N-linked (GlcNAc...) asparagine glycosylation occurs at asparagine 5. The chain crosses the membrane as a helical span at residues 26 to 46 (QLFGVFLVIYVVTLMGNAIIT). At 47 to 54 (VIISLNQS) the chain is on the cytoplasmic side. Residues 55 to 75 (LHVPMYLFLLNLSVVEVSFSA) form a helical membrane-spanning segment. The Extracellular segment spans residues 76-99 (VITPEMLVVLSTEKTMISFVGCFA). Cysteine 97 and cysteine 189 form a disulfide bridge. A helical transmembrane segment spans residues 100-120 (QMYFILLFGGTECFLLGAMAY). The Cytoplasmic portion of the chain corresponds to 121–139 (DRFAAICHPLNYPVIMNRG). Residues 140 to 160 (VFMKLVIFSWISGIMVATVQT) form a helical membrane-spanning segment. The Extracellular portion of the chain corresponds to 161-197 (TWVFSFPFCGPNEINHLFCETPPVLELVCADTFLFEI). A helical transmembrane segment spans residues 198-217 (YAFTGTILIVMVPFLLILLS). At 218 to 237 (YIRVLFAILKMPSTTGRQKA) the chain is on the cytoplasmic side. A helical transmembrane segment spans residues 238–258 (FSTCASHLTSVTLFYGTANMT). Residues 259–271 (YLQPKSGYSPETK) are Extracellular-facing. A helical transmembrane segment spans residues 272–292 (KLISLAYTLLTPLLNPLIYSL). The Cytoplasmic portion of the chain corresponds to 293 to 314 (RNSEMKRTLIKLWRRKVILHTF).

Belongs to the G-protein coupled receptor 1 family.

Its subcellular location is the cell membrane. Its function is as follows. Odorant receptor. This is Olfactory receptor 10A3 (OR10A3) from Homo sapiens (Human).